The chain runs to 444 residues: Argininosuccinate synthase (444 aa).

ATP contacts are provided by residues 18 to 26 (AFSGGLDTS) and alanine 44. L-citrulline is bound at residue tyrosine 100. Residues glycine 130 and threonine 132 each contribute to the ATP site. L-aspartate contacts are provided by threonine 132, asparagine 136, and aspartate 137. Asparagine 136 is a binding site for L-citrulline. Aspartate 137 lines the ATP pocket. L-citrulline-binding residues include arginine 140 and serine 193. Aspartate 195 provides a ligand contact to ATP. Residues threonine 202, glutamate 204, and glutamate 281 each contribute to the L-citrulline site.

Belongs to the argininosuccinate synthase family. Type 2 subfamily. Homotetramer.

It localises to the cytoplasm. It carries out the reaction L-citrulline + L-aspartate + ATP = 2-(N(omega)-L-arginino)succinate + AMP + diphosphate + H(+). The protein operates within amino-acid biosynthesis; L-arginine biosynthesis; L-arginine from L-ornithine and carbamoyl phosphate: step 2/3. The protein is Argininosuccinate synthase of Actinobacillus succinogenes (strain ATCC 55618 / DSM 22257 / CCUG 43843 / 130Z).